Consider the following 131-residue polypeptide: Profilin-1 (131 aa).

Belongs to the profilin family. Occurs in many kinds of cells as a complex with monomeric actin in a 1:1 ratio.

The protein resides in the cytoplasm. Its subcellular location is the cytoskeleton. Functionally, binds to actin and affects the structure of the cytoskeleton. At high concentrations, profilin prevents the polymerization of actin, whereas it enhances it at low concentrations. By binding to PIP2, it inhibits the formation of IP3 and DG. The chain is Profilin-1 from Lilium longiflorum (Trumpet lily).